The following is a 725-amino-acid chain: Catalase-peroxidase 1 (725 aa).

The tryptophyl-tyrosyl-methioninium (Trp-Tyr) (with M-250) cross-link spans tryptophan 96 to tyrosine 224. Histidine 97 functions as the Proton acceptor in the catalytic mechanism. Residues tyrosine 224 to methionine 250 constitute a cross-link (tryptophyl-tyrosyl-methioninium (Tyr-Met) (with W-96)). Histidine 265 serves as a coordination point for heme b.

This sequence belongs to the peroxidase family. Peroxidase/catalase subfamily. In terms of assembly, homodimer or homotetramer. It depends on heme b as a cofactor. Formation of the three residue Trp-Tyr-Met cross-link is important for the catalase, but not the peroxidase activity of the enzyme.

The catalysed reaction is H2O2 + AH2 = A + 2 H2O. It catalyses the reaction 2 H2O2 = O2 + 2 H2O. Functionally, bifunctional enzyme with both catalase and broad-spectrum peroxidase activity. This is Catalase-peroxidase 1 from Idiomarina loihiensis (strain ATCC BAA-735 / DSM 15497 / L2-TR).